A 121-amino-acid polypeptide reads, in one-letter code: Large ribosomal subunit protein bL20 (121 aa).

This sequence belongs to the bacterial ribosomal protein bL20 family.

Functionally, binds directly to 23S ribosomal RNA and is necessary for the in vitro assembly process of the 50S ribosomal subunit. It is not involved in the protein synthesizing functions of that subunit. The protein is Large ribosomal subunit protein bL20 of Ruegeria sp. (strain TM1040) (Silicibacter sp.).